The sequence spans 226 residues: Uracil-DNA glycosylase (226 aa).

Asp64 serves as the catalytic Proton acceptor.

This sequence belongs to the uracil-DNA glycosylase (UDG) superfamily. UNG family.

Its subcellular location is the cytoplasm. The catalysed reaction is Hydrolyzes single-stranded DNA or mismatched double-stranded DNA and polynucleotides, releasing free uracil.. Its function is as follows. Excises uracil residues from the DNA which can arise as a result of misincorporation of dUMP residues by DNA polymerase or due to deamination of cytosine. The polypeptide is Uracil-DNA glycosylase (Vibrio vulnificus (strain CMCP6)).